A 743-amino-acid chain; its full sequence is MEQTYQYAWIIPFLPLPVPMLIGVGLLLFPTATKSLRRMWAFQSVLLLSIVMIFSMNLSIHQINSSSVYQYVWSWIINNDFSLEFGYLIDPLTSIMSILITTVGILVLIYSDNYMSHDHGYLRFFAYMSFFSTSMLGLVTSSNLIQIYIFWELVGICSYLLIGFWFTRPVAAKACQKAFVTNRVGDFGLLLGILGFYWITGSFEFRDLFQIFNNLISNNEVNFLFVTLCAVLLFAGAIAKSAQFPLHVWLPDAMEGPTPISALIHAATMVAAGIFLVARLMPLFIVIPHIMNFISLIGIITVFLGATLALAQKDIKRGLAYSTMSQLGYMMLALGMGSYRSALFHLITHAYSKALLFLGSGSVIHSMETLVGYCPKKSQNMVLMGGLTKHVPITKISFLLGTLSLCGIPPLACFWSKDEILNDSWLYSPIFAIIAWSTAGLTAFYMCRIYLLTFEGHLNVHFQNYSGKKNTPFYSISLWGKEGSKISNKNFRLVTLLKMKNGRLSFFSNKVYKIDENVRNMIQPFLSIPHFGNTKTYSYPYESDNTMLFPILILIIFTLFIGFLGIPFNQDGVNLDILSKWLTPSINLLHKNSNNSIDWYEFCKDAVFSVSIASFGIFIAFFLYKPVYSSFQNLDLINSFVKTGPKRIFYDKIKNAIYDWSYNRGYIDAFYETFLTGGMRKLAKFAHFFDRRIIDGIPNGAGLMSFFVAEVIKSVGGGRISSYLFFYFSYVSICLLSYYFFNL.

Helical transmembrane passes span 9-29 (WIIPFLPLPVPMLIGVGLLLF), 40-60 (WAFQSVLLLSIVMIFSMNLSI), 89-109 (IDPLTSIMSILITTVGILVLI), 125-145 (FAYMSFFSTSMLGLVTSSNLI), 147-167 (IYIFWELVGICSYLLIGFWFT), 185-205 (GDFGLLLGILGFYWITGSFEF), 219-239 (NEVNFLFVTLCAVLLFAGAIA), 258-278 (TPISALIHAATMVAAGIFLVA), 283-303 (LFIVIPHIMNFISLIGIITVF), 327-347 (LGYMMLALGMGSYRSALFHLI), 354-374 (ALLFLGSGSVIHSMETLVGYC), 396-416 (ISFLLGTLSLCGIPPLACFWS), 425-445 (WLYSPIFAIIAWSTAGLTAFY), 548-568 (LFPILILIIFTLFIGFLGIPF), 607-627 (VFSVSIASFGIFIAFFLYKPV), and 723-743 (YLFFYFSYVSICLLSYYFFNL).

The protein belongs to the complex I subunit 5 family. In terms of assembly, NDH is composed of at least 16 different subunits, 5 of which are encoded in the nucleus.

The protein resides in the plastid. The protein localises to the chloroplast thylakoid membrane. The catalysed reaction is a plastoquinone + NADH + (n+1) H(+)(in) = a plastoquinol + NAD(+) + n H(+)(out). The enzyme catalyses a plastoquinone + NADPH + (n+1) H(+)(in) = a plastoquinol + NADP(+) + n H(+)(out). Its function is as follows. NDH shuttles electrons from NAD(P)H:plastoquinone, via FMN and iron-sulfur (Fe-S) centers, to quinones in the photosynthetic chain and possibly in a chloroplast respiratory chain. The immediate electron acceptor for the enzyme in this species is believed to be plastoquinone. Couples the redox reaction to proton translocation, and thus conserves the redox energy in a proton gradient. The chain is NAD(P)H-quinone oxidoreductase subunit 5, chloroplastic (ndhF) from Carthamus tinctorius (Safflower).